A 116-amino-acid polypeptide reads, in one-letter code: Large ribosomal subunit protein uL18 (116 aa).

This sequence belongs to the universal ribosomal protein uL18 family. In terms of assembly, part of the 50S ribosomal subunit; part of the 5S rRNA/L5/L18/L25 subcomplex. Contacts the 5S and 23S rRNAs.

Its function is as follows. This is one of the proteins that bind and probably mediate the attachment of the 5S RNA into the large ribosomal subunit, where it forms part of the central protuberance. The sequence is that of Large ribosomal subunit protein uL18 from Pseudomonas fluorescens (strain ATCC BAA-477 / NRRL B-23932 / Pf-5).